The sequence spans 63 residues: MKASELKDKSVEELNTELLGLLREQFNMRMQASTGQLAQTHTLRTVRRDIARVKTVINQKAGQ.

Belongs to the universal ribosomal protein uL29 family.

In Pseudoalteromonas translucida (strain TAC 125), this protein is Large ribosomal subunit protein uL29.